Consider the following 51-residue polypeptide: Sperm protamine P1 (51 aa).

It belongs to the protamine P1 family. In terms of tissue distribution, testis.

It is found in the nucleus. The protein localises to the chromosome. Protamines substitute for histones in the chromatin of sperm during the haploid phase of spermatogenesis. They compact sperm DNA into a highly condensed, stable and inactive complex. This chain is Sperm protamine P1 (PRM1), found in Trachypithecus johnii (Nilgiri langur).